A 552-amino-acid polypeptide reads, in one-letter code: Gamma-aminobutyric acid receptor subunit alpha-4 (552 aa).

Residues methionine 1–glycine 35 form the signal peptide. The Extracellular portion of the chain corresponds to glutamine 36–phenylalanine 259. Residue asparagine 47 is glycosylated (N-linked (GlcNAc...) asparagine). Arginine 100 serves as a coordination point for 4-aminobutanoate. N-linked (GlcNAc...) asparagine glycans are attached at residues asparagine 144 and asparagine 157. Threonine 163 lines the 4-aminobutanoate pocket. Cysteine 172 and cysteine 186 are joined by a disulfide. The chain crosses the membrane as a helical span at residues methionine 260–isoleucine 280. The Cytoplasmic portion of the chain corresponds to asparagine 281 to serine 284. A helical membrane pass occupies residues valine 285–serine 305. Topologically, residues alanine 306–alanine 318 are extracellular. A helical membrane pass occupies residues methionine 319 to asparagine 341. At tyrosine 342–lysine 515 the chain is on the cytoplasmic side. Disordered regions lie at residues lysine 353–serine 436, alanine 448–serine 470, and threonine 486–threonine 513. A compositionally biased stretch (polar residues) spans arginine 403–threonine 423. Composition is skewed to low complexity over residues alanine 448–serine 458 and threonine 486–alanine 499. Residues threonine 500–serine 509 show a composition bias toward pro residues. A helical membrane pass occupies residues isoleucine 516–valine 538. Residues tyrosine 539 to methionine 552 are Extracellular-facing.

It belongs to the ligand-gated ion channel (TC 1.A.9) family. Gamma-aminobutyric acid receptor (TC 1.A.9.5) subfamily. GABRA4 sub-subfamily. As to quaternary structure, heteropentamer, formed by a combination of alpha (GABRA1-6), beta (GABRB1-3), gamma (GABRG1-3), delta (GABRD), epsilon (GABRE), rho (GABRR1-3), pi (GABRP) and theta (GABRQ) chains, each subunit exhibiting distinct physiological and pharmacological properties. In terms of tissue distribution, expressed in the brain.

It is found in the cell membrane. The protein localises to the postsynaptic cell membrane. With respect to regulation, potentiated by histamine. In terms of biological role, alpha subunit of the heteropentameric ligand-gated chloride channel gated by gamma-aminobutyric acid (GABA), a major inhibitory neurotransmitter in the brain. GABA-gated chloride channels, also named GABA(A) receptors (GABAAR), consist of five subunits arranged around a central pore and contain GABA active binding site(s) located at the alpha and beta subunit interface(s). Alpha-4/GABRA4 subunit often assembles with delta or gamma-2 subunits, in combination with beta subunits. When activated by GABA, GABAARs selectively allow the flow of chloride anions across the cell membrane down their electrochemical gradient. GABAARs containing alpha-4 are predominantly extrasynaptic, contributing to tonic inhibition in dentate granule cells and thalamic relay neurons. Extrasynaptic alpha-4-containing GABAARs control levels of excitability and network activity. GABAAR containing alpha-4-beta-3-delta subunits can simultaneously bind GABA and histamine where histamine binds at the interface of two neighboring beta subunits, which may be involved in the regulation of sleep and wakefulness. This chain is Gamma-aminobutyric acid receptor subunit alpha-4, found in Rattus norvegicus (Rat).